The primary structure comprises 160 residues: Transcription antitermination protein NusB (160 aa).

The protein belongs to the NusB family.

Functionally, involved in transcription antitermination. Required for transcription of ribosomal RNA (rRNA) genes. Binds specifically to the boxA antiterminator sequence of the ribosomal RNA (rrn) operons. The protein is Transcription antitermination protein NusB of Nitrobacter hamburgensis (strain DSM 10229 / NCIMB 13809 / X14).